A 338-amino-acid chain; its full sequence is Peroxidase 15 (338 aa).

Residues 1-22 form the signal peptide; sequence MARIGSFLIILYLIYALTLCIC. Cystine bridges form between Cys-45/Cys-125, Cys-78/Cys-83, Cys-131/Cys-332, and Cys-210/Cys-242. His-76 serves as the catalytic Proton acceptor. Asp-77, Val-80, Gly-82, Asp-84, and Ser-86 together coordinate Ca(2+). Pro-173 is a substrate binding site. N-linked (GlcNAc...) asparagine glycosylation occurs at Asn-176. Position 203 (His-203) interacts with heme b. Thr-204 contributes to the Ca(2+) binding site. 2 N-linked (GlcNAc...) asparagine glycosylation sites follow: Asn-219 and Asn-250. 3 residues coordinate Ca(2+): Asp-255, Ser-258, and Asp-263.

The protein belongs to the peroxidase family. Classical plant (class III) peroxidase subfamily. The cofactor is heme b. Requires Ca(2+) as cofactor.

The protein resides in the secreted. It catalyses the reaction 2 a phenolic donor + H2O2 = 2 a phenolic radical donor + 2 H2O. Functionally, removal of H(2)O(2), oxidation of toxic reductants, biosynthesis and degradation of lignin, suberization, auxin catabolism, response to environmental stresses such as wounding, pathogen attack and oxidative stress. These functions might be dependent on each isozyme/isoform in each plant tissue. The sequence is that of Peroxidase 15 (PER15) from Arabidopsis thaliana (Mouse-ear cress).